The chain runs to 434 residues: Enolase (434 aa).

Q163 is a (2R)-2-phosphoglycerate binding site. Residue E205 is the Proton donor of the active site. 3 residues coordinate Mg(2+): D242, E289, and D316. K341, R370, S371, and K392 together coordinate (2R)-2-phosphoglycerate. Residue K341 is the Proton acceptor of the active site.

Belongs to the enolase family. It depends on Mg(2+) as a cofactor.

The protein localises to the cytoplasm. It localises to the secreted. Its subcellular location is the cell surface. It carries out the reaction (2R)-2-phosphoglycerate = phosphoenolpyruvate + H2O. It participates in carbohydrate degradation; glycolysis; pyruvate from D-glyceraldehyde 3-phosphate: step 4/5. In terms of biological role, catalyzes the reversible conversion of 2-phosphoglycerate (2-PG) into phosphoenolpyruvate (PEP). It is essential for the degradation of carbohydrates via glycolysis. The polypeptide is Enolase (Lacticaseibacillus paracasei (strain ATCC 334 / BCRC 17002 / CCUG 31169 / CIP 107868 / KCTC 3260 / NRRL B-441) (Lactobacillus paracasei)).